The sequence spans 217 residues: MTGKITTLLFDLDGTLINTNELIIKTFQATLQEFLPDRVFTREDILPFIGPSLMETFREINPAHAEEMRVFYREYNLKHHDDLILEYDGVYEAIRALYEEDYKLGIVSTKMYDTIMRGLKVTGLDKFFQVVIGLDQVSNAKPDPEGIEMALSLLNATKEEAIMIGDNYHDIEAGKNAETLTAGVAWAIKGPEHLAQFQPDFMLEKMSDLLAIVRDEE.

Residue aspartate 11 is the Nucleophile of the active site.

Belongs to the HAD-like hydrolase superfamily. PpaX family. The cofactor is Mg(2+).

It catalyses the reaction diphosphate + H2O = 2 phosphate + H(+). Hydrolyzes pyrophosphate formed during P-Ser-HPr dephosphorylation by HPrK/P. Might play a role in controlling the intracellular pyrophosphate pool. This chain is Pyrophosphatase PpaX, found in Listeria innocua serovar 6a (strain ATCC BAA-680 / CLIP 11262).